We begin with the raw amino-acid sequence, 188 residues long: Elongation factor P (188 aa).

This sequence belongs to the elongation factor P family.

It localises to the cytoplasm. The protein operates within protein biosynthesis; polypeptide chain elongation. In terms of biological role, involved in peptide bond synthesis. Stimulates efficient translation and peptide-bond synthesis on native or reconstituted 70S ribosomes in vitro. Probably functions indirectly by altering the affinity of the ribosome for aminoacyl-tRNA, thus increasing their reactivity as acceptors for peptidyl transferase. In Rhodospirillum centenum (strain ATCC 51521 / SW), this protein is Elongation factor P.